Here is a 198-residue protein sequence, read N- to C-terminus: Peroxynitrite isomerase (198 aa).

The GXWXGXG motif lies at 20–26 (GVWEGTG). Residue H189 participates in heme b binding.

This sequence belongs to the nitrobindin family. In terms of assembly, homodimer. Heme b is required as a cofactor.

The catalysed reaction is peroxynitrite = nitrate. Its pathway is nitrogen metabolism. Functionally, heme-binding protein able to scavenge peroxynitrite and to protect free L-tyrosine against peroxynitrite-mediated nitration, by acting as a peroxynitrite isomerase that converts peroxynitrite to nitrate. Therefore, this protein likely plays a role in peroxynitrite sensing and in the detoxification of reactive nitrogen and oxygen species (RNS and ROS, respectively). Is able to bind nitric oxide (NO) in vitro, but may act as a sensor of peroxynitrite levels in vivo. In Leifsonia xyli subsp. xyli (strain CTCB07), this protein is Peroxynitrite isomerase.